The sequence spans 71 residues: Large ribosomal subunit protein eL38 (71 aa).

The protein belongs to the eukaryotic ribosomal protein eL38 family.

In Argas monolakensis (Mono lake bird tick), this protein is Large ribosomal subunit protein eL38 (RpL38).